The primary structure comprises 240 residues: UDP-2,3-diacylglucosamine hydrolase (240 aa).

5 residues coordinate Mn(2+): Asp-8, His-10, Asp-41, Asn-79, and His-114. 79–80 (NR) is a substrate binding site. Residues Asp-122, Ser-160, Asn-164, Lys-167, and His-195 each contribute to the substrate site. Mn(2+) is bound by residues His-195 and His-197.

It belongs to the LpxH family. Mn(2+) is required as a cofactor.

Its subcellular location is the cell inner membrane. The catalysed reaction is UDP-2-N,3-O-bis[(3R)-3-hydroxytetradecanoyl]-alpha-D-glucosamine + H2O = 2-N,3-O-bis[(3R)-3-hydroxytetradecanoyl]-alpha-D-glucosaminyl 1-phosphate + UMP + 2 H(+). It functions in the pathway glycolipid biosynthesis; lipid IV(A) biosynthesis; lipid IV(A) from (3R)-3-hydroxytetradecanoyl-[acyl-carrier-protein] and UDP-N-acetyl-alpha-D-glucosamine: step 4/6. Functionally, hydrolyzes the pyrophosphate bond of UDP-2,3-diacylglucosamine to yield 2,3-diacylglucosamine 1-phosphate (lipid X) and UMP by catalyzing the attack of water at the alpha-P atom. Involved in the biosynthesis of lipid A, a phosphorylated glycolipid that anchors the lipopolysaccharide to the outer membrane of the cell. The protein is UDP-2,3-diacylglucosamine hydrolase of Salmonella paratyphi A (strain ATCC 9150 / SARB42).